A 243-amino-acid polypeptide reads, in one-letter code: UMP-CMP kinase 1 (243 aa).

29-34 contributes to the ATP binding site; that stretch reads GSGKGT. The tract at residues 49 to 78 is NMP; that stretch reads SAGDLLREEAKYDTEQGTMIKNLMNEGKLV. Residues arginine 55, 76–78, and 103–106 contribute to the a ribonucleoside 5'-phosphate site; these read KLV and GFPR. Asparagine 110 contacts CMP. Residues 141 to 149 form an LID region; that stretch reads NRNQGRDDD. Position 142 (arginine 142) interacts with ATP. A ribonucleoside 5'-phosphate contacts are provided by arginine 146 and arginine 157. Position 185 (arginine 185) interacts with ATP.

This sequence belongs to the adenylate kinase family. UMP-CMP kinase subfamily. In terms of assembly, monomer. Requires Mg(2+) as cofactor.

Its subcellular location is the cytoplasm. The protein localises to the nucleus. The catalysed reaction is UMP + ATP = UDP + ADP. It carries out the reaction CMP + ATP = CDP + ADP. The enzyme catalyses dCMP + ATP = dCDP + ADP. In terms of biological role, catalyzes the phosphorylation of pyrimidine nucleoside monophosphates at the expense of ATP. Plays an important role in de novo pyrimidine nucleotide biosynthesis. Has preference for UMP and CMP as phosphate acceptors. This is UMP-CMP kinase 1 from Oryza sativa subsp. japonica (Rice).